The sequence spans 129 residues: NADPH-dependent 7-cyano-7-deazaguanine reductase (129 aa).

Cys34 serves as the catalytic Thioimide intermediate. Asp41 serves as the catalytic Proton donor. Residues 56-58 and 75-76 contribute to the substrate site; these read VEL and HE.

It belongs to the GTP cyclohydrolase I family. QueF type 1 subfamily.

It localises to the cytoplasm. It carries out the reaction 7-aminomethyl-7-carbaguanine + 2 NADP(+) = 7-cyano-7-deazaguanine + 2 NADPH + 3 H(+). Its pathway is tRNA modification; tRNA-queuosine biosynthesis. Functionally, catalyzes the NADPH-dependent reduction of 7-cyano-7-deazaguanine (preQ0) to 7-aminomethyl-7-deazaguanine (preQ1). The chain is NADPH-dependent 7-cyano-7-deazaguanine reductase from Thioalkalivibrio sulfidiphilus (strain HL-EbGR7).